Consider the following 431-residue polypeptide: UDP-N-acetylglucosamine 1-carboxyvinyltransferase (431 aa).

22 to 23 serves as a coordination point for phosphoenolpyruvate; it reads KN. Arg-102 serves as a coordination point for UDP-N-acetyl-alpha-D-glucosamine. Cys-126 acts as the Proton donor in catalysis. Cys-126 carries the 2-(S-cysteinyl)pyruvic acid O-phosphothioketal modification. Positions 318 and 340 each coordinate UDP-N-acetyl-alpha-D-glucosamine.

This sequence belongs to the EPSP synthase family. MurA subfamily.

The protein resides in the cytoplasm. The catalysed reaction is phosphoenolpyruvate + UDP-N-acetyl-alpha-D-glucosamine = UDP-N-acetyl-3-O-(1-carboxyvinyl)-alpha-D-glucosamine + phosphate. Its pathway is cell wall biogenesis; peptidoglycan biosynthesis. Functionally, cell wall formation. Adds enolpyruvyl to UDP-N-acetylglucosamine. This chain is UDP-N-acetylglucosamine 1-carboxyvinyltransferase, found in Bartonella quintana (strain Toulouse) (Rochalimaea quintana).